The primary structure comprises 170 residues: Transcriptional repressor NrdR (170 aa).

Residues cysteine 3–cysteine 34 fold into a zinc finger. One can recognise an ATP-cone domain in the interval leucine 46–aspartate 136. Residues arginine 148 to aspartate 170 are disordered.

This sequence belongs to the NrdR family. Zn(2+) is required as a cofactor.

In terms of biological role, negatively regulates transcription of bacterial ribonucleotide reductase nrd genes and operons by binding to NrdR-boxes. In Streptomyces griseus subsp. griseus (strain JCM 4626 / CBS 651.72 / NBRC 13350 / KCC S-0626 / ISP 5235), this protein is Transcriptional repressor NrdR.